The chain runs to 130 residues: Calcium-binding protein KRP1 (130 aa).

The 36-residue stretch at 72-107 (LTDEDVRCMIKEGDFDCDGALNQMEFCVLMFRLSPD) folds into the EF-hand domain. Positions 85, 87, 89, and 96 each coordinate Ca(2+).

Its function is as follows. Potential calcium sensor that binds calcium in vitro. In Arabidopsis thaliana (Mouse-ear cress), this protein is Calcium-binding protein KRP1.